A 353-amino-acid chain; its full sequence is Feruloyl esterase B (353 aa).

Positions 1 to 18 (MAIPLVLVLAWLLPVVLA) are cleaved as a signal peptide. The tract at residues 19-291 (ASLTQVNNFG…VSVVLDWFGI (273 aa)) is catalytic. The active-site Charge relay system is S136. N-linked (GlcNAc...) asparagine glycosylation is found at N179 and N246. Residues 317–353 (CTAAHWAQCGGIGYSGCTACASPYTCQKANDYYSQCL) form the CBM1 domain.

Belongs to the carbohydrate esterase 1 (CE1) family. Feruloyl esterase type B subfamily. Glycosylated.

Its subcellular location is the secreted. It carries out the reaction feruloyl-polysaccharide + H2O = ferulate + polysaccharide.. With respect to regulation, inhibited by the specific serine esterase inhibitor AEBSF. In terms of biological role, involved in degradation of plant cell walls. Hydrolyzes the feruloyl-arabinose ester bond in arabinoxylans, and the feruloyl-galactose and feruloyl-arabinose ester bonds in pectin. Binds strongly to cellulose. The chain is Feruloyl esterase B (FAEB) from Talaromyces funiculosus (Fruitlet core rot fungus).